Reading from the N-terminus, the 550-residue chain is Methionine--tRNA ligase (550 aa).

Positions 13 to 23 match the 'HIGH' region motif; it reads PYANGPLHFGH. The Zn(2+) site is built by Cys-145, Cys-148, Cys-158, and Cys-161. The 'KMSKS' region signature appears at 331-335; that stretch reads QFSKS. Lys-334 serves as a coordination point for ATP.

It belongs to the class-I aminoacyl-tRNA synthetase family. MetG type 1 subfamily. In terms of assembly, monomer. Zn(2+) is required as a cofactor.

Its subcellular location is the cytoplasm. It catalyses the reaction tRNA(Met) + L-methionine + ATP = L-methionyl-tRNA(Met) + AMP + diphosphate. Functionally, is required not only for elongation of protein synthesis but also for the initiation of all mRNA translation through initiator tRNA(fMet) aminoacylation. The protein is Methionine--tRNA ligase of Chlamydia trachomatis serovar L2b (strain UCH-1/proctitis).